Consider the following 186-residue polypeptide: TATA box-binding protein-like 1 (186 aa).

This sequence belongs to the TBP family. As to expression, expressed ubiquitously with highest expression in the ovary and testis.

The protein localises to the cytoplasm. Its subcellular location is the nucleus. Part of a specialized transcription system that mediates the transcription of most ribosomal proteins through the 5'-TCT-3' motif which is a core promoter element at these genes. Seems to also mediate the transcription of NF1. Does not bind the TATA box. Members of the TBP family are differentially required to regulate transcription and development during early embryogenesis. Particularly regulates genes that have a role in catabolism. This is TATA box-binding protein-like 1 (tbpl1) from Xenopus laevis (African clawed frog).